The sequence spans 243 residues: Tegument protein UL14 homolog (243 aa).

It belongs to the alphaherpesvirinae HHV-1 UL14 protein family. Phosphorylated.

The protein resides in the virion tegument. Its subcellular location is the host cytoplasm. The protein localises to the host nucleus. Contributes to the nuclear transport of the viral transcriptional activator VP16 homolog during the early phase of infection. Therefore, participates indirectly in the regulation of the immediate-early gene expression. Additionally, seems to be important for efficient nuclear targeting of capsids. In Gallid herpesvirus 2 (strain Chicken/Md5/ATCC VR-987) (GaHV-2), this protein is Tegument protein UL14 homolog (MDV026).